Consider the following 138-residue polypeptide: Large ribosomal subunit protein uL16 (138 aa).

The span at 1-13 (MLQPARRKYRKEQ) shows a compositional bias: basic residues. Residues 1–20 (MLQPARRKYRKEQKGRNTGV) form a disordered region.

Belongs to the universal ribosomal protein uL16 family. Part of the 50S ribosomal subunit.

In terms of biological role, binds 23S rRNA and is also seen to make contacts with the A and possibly P site tRNAs. This Verminephrobacter eiseniae (strain EF01-2) protein is Large ribosomal subunit protein uL16.